Consider the following 257-residue polypeptide: NAD-capped RNA hydrolase NudC (257 aa).

A substrate-binding site is contributed by arginine 69. 2 residues coordinate Zn(2+): cysteine 98 and cysteine 101. Glutamate 111 is a substrate binding site. Positions 116 and 119 each coordinate Zn(2+). Tyrosine 124 contacts substrate. The Nudix hydrolase domain occupies 125-248 (PQIAPCIIVA…TVARRLIEDT (124 aa)). Alanine 158, glutamate 174, and glutamate 178 together coordinate a divalent metal cation. The short motif at 159–180 (GFVEVGETLEQAVAREVMEESG) is the Nudix box element. Position 192–199 (192–199 (QPWPFPQS)) interacts with substrate. Glutamate 219 is a binding site for a divalent metal cation. Residue alanine 241 participates in substrate binding.

This sequence belongs to the Nudix hydrolase family. NudC subfamily. In terms of assembly, homodimer. Mg(2+) is required as a cofactor. Mn(2+) serves as cofactor. Requires Zn(2+) as cofactor.

The enzyme catalyses a 5'-end NAD(+)-phospho-ribonucleoside in mRNA + H2O = a 5'-end phospho-adenosine-phospho-ribonucleoside in mRNA + beta-nicotinamide D-ribonucleotide + 2 H(+). It catalyses the reaction NAD(+) + H2O = beta-nicotinamide D-ribonucleotide + AMP + 2 H(+). It carries out the reaction NADH + H2O = reduced beta-nicotinamide D-ribonucleotide + AMP + 2 H(+). In terms of biological role, mRNA decapping enzyme that specifically removes the nicotinamide adenine dinucleotide (NAD) cap from a subset of mRNAs by hydrolyzing the diphosphate linkage to produce nicotinamide mononucleotide (NMN) and 5' monophosphate mRNA. The NAD-cap is present at the 5'-end of some mRNAs and stabilizes RNA against 5'-processing. Has preference for mRNAs with a 5'-end purine. Catalyzes the hydrolysis of a broad range of dinucleotide pyrophosphates. The protein is NAD-capped RNA hydrolase NudC of Klebsiella pneumoniae (strain 342).